The following is a 101-amino-acid chain: Small ribosomal subunit protein uS10 (101 aa).

It belongs to the universal ribosomal protein uS10 family. As to quaternary structure, part of the 30S ribosomal subunit.

Involved in the binding of tRNA to the ribosomes. The sequence is that of Small ribosomal subunit protein uS10 from Methanocaldococcus jannaschii (strain ATCC 43067 / DSM 2661 / JAL-1 / JCM 10045 / NBRC 100440) (Methanococcus jannaschii).